The primary structure comprises 251 residues: Triosephosphate isomerase (251 aa).

Residue N12 to K14 participates in substrate binding. The Electrophile role is filled by H98. E168 (proton acceptor) is an active-site residue. Residues G174, S213, and G234–G235 contribute to the substrate site.

The protein belongs to the triosephosphate isomerase family. In terms of assembly, homodimer.

It localises to the cytoplasm. It carries out the reaction D-glyceraldehyde 3-phosphate = dihydroxyacetone phosphate. The protein operates within carbohydrate biosynthesis; gluconeogenesis. Its pathway is carbohydrate degradation; glycolysis; D-glyceraldehyde 3-phosphate from glycerone phosphate: step 1/1. Functionally, involved in the gluconeogenesis. Catalyzes stereospecifically the conversion of dihydroxyacetone phosphate (DHAP) to D-glyceraldehyde-3-phosphate (G3P). This chain is Triosephosphate isomerase, found in Bradyrhizobium diazoefficiens (strain JCM 10833 / BCRC 13528 / IAM 13628 / NBRC 14792 / USDA 110).